A 420-amino-acid chain; its full sequence is MQSWPTPEVPALAGTPVPLELFDTADQEVRLVETPPAGSDTPVGMYVCGITPYDSTHLGHAATYLAFDLIYRILLDNDHDVHYVQNITDVDDPLFERAARDGVDWRDLGTSQINLFRSDMEALSIIPPKDYIGAIESIDEVIEMVKTLLDEGAAYIVEDAEYPDVYASINATDKFGYESNYDAATMAEFFAERGGDPDRPGKKNPMDALLWRAAREGEPSWESPFGAGRPGWHIECSAIATNRLGHSFDIQGGGSDLIFPHHEFSAAHAEAAHGVERMAKHYVHAGMISQDGVKMSKSLGNLEFVSRLTAAGHEPGAIRLGVFANHYRGNRDWNAESLATAEQRLATWREAARAATNREDAIAVVEQLRAHLSADLDTPGALAAVDNWAAGIDTTAGSKEFTEVGNIVVAAIDALLGVQL.

A Zn(2+)-binding site is contributed by Cys-48. L-cysteinyl-5'-AMP contacts are provided by residues 48–51, Thr-63, and 86–88; these read CGIT and NIT. The 'HIGH' region motif lies at 50–60; sequence ITPYDSTHLGH. Positions 192–197 match the 'ERGGDP' region motif; that stretch reads ERGGDP. Trp-232 provides a ligand contact to L-cysteinyl-5'-AMP. Cys-236 lines the Zn(2+) pocket. An L-cysteinyl-5'-AMP-binding site is contributed by 254 to 256; it reads GSD. His-261 lines the Zn(2+) pocket. L-cysteinyl-5'-AMP is bound at residue Ile-288. Positions 294–298 match the 'KMSKS' region motif; that stretch reads KMSKS.

Belongs to the class-I aminoacyl-tRNA synthetase family. MshC subfamily. In terms of assembly, monomer. The cofactor is Zn(2+).

The enzyme catalyses 1D-myo-inositol 2-amino-2-deoxy-alpha-D-glucopyranoside + L-cysteine + ATP = 1D-myo-inositol 2-(L-cysteinylamino)-2-deoxy-alpha-D-glucopyranoside + AMP + diphosphate + H(+). Catalyzes the ATP-dependent condensation of GlcN-Ins and L-cysteine to form L-Cys-GlcN-Ins. The protein is L-cysteine:1D-myo-inositol 2-amino-2-deoxy-alpha-D-glucopyranoside ligase of Corynebacterium glutamicum (strain R).